Reading from the N-terminus, the 260-residue chain is Ribosomal RNA small subunit methyltransferase G (260 aa).

The interval 1–45 (MKQRGPAGGRSSSPKPSAPGSGAGEGPDGRSAPASQKINKASAND) is disordered. A compositionally biased stretch (low complexity) spans 9-20 (GRSSSPKPSAPG). Over residues 33-45 (PASQKINKASAND) the composition is skewed to polar residues. S-adenosyl-L-methionine contacts are provided by G123, F128, and R193.

Belongs to the methyltransferase superfamily. RNA methyltransferase RsmG family.

Its subcellular location is the cytoplasm. The catalysed reaction is guanosine(527) in 16S rRNA + S-adenosyl-L-methionine = N(7)-methylguanosine(527) in 16S rRNA + S-adenosyl-L-homocysteine. Its function is as follows. Specifically methylates the N7 position of guanine in position 527 of 16S rRNA. In Bradyrhizobium diazoefficiens (strain JCM 10833 / BCRC 13528 / IAM 13628 / NBRC 14792 / USDA 110), this protein is Ribosomal RNA small subunit methyltransferase G.